The sequence spans 555 residues: 1,3-beta-glucanosyltransferase GAS2 (555 aa).

The first 24 residues, 1 to 24, serve as a signal peptide directing secretion; the sequence is MNKKQNFYAAIIVAIFLCLQLSHG. Cysteine 89 and cysteine 118 are oxidised to a cystine. (1,3-beta-D-glucosyl)n-binding positions include tyrosine 107, 134–142, asparagine 175, glutamate 176, aspartate 217, and arginine 222; that span reads SEPDISINR. Glutamate 176 serves as the catalytic Proton donor. 6 cysteine pairs are disulfide-bonded: cysteine 231/cysteine 367, cysteine 247/cysteine 278, cysteine 390/cysteine 442, cysteine 392/cysteine 489, cysteine 399/cysteine 466, and cysteine 419/cysteine 424. The active-site Nucleophile is the glutamate 275. Tyrosine 307 provides a ligand contact to (1,3-beta-D-glucosyl)n. Residue asparagine 498 is glycosylated (N-linked (GlcNAc...) asparagine). Aspartate 531 is lipidated: GPI-anchor amidated aspartate. Residues 532–555 constitute a propeptide, removed in mature form; it reads GTIAFKTSGFVILLISMIAAGILL.

It belongs to the glycosyl hydrolase 72 family. N-glycosylated.

It is found in the cell membrane. Its function is as follows. Splits internally a 1,3-beta-glucan molecule and transfers the newly generated reducing end (the donor) to the non-reducing end of another 1,3-beta-glucan molecule (the acceptor) forming a 1,3-beta linkage, resulting in the elongation of 1,3-beta-glucan chains in the cell wall. Involved in spore wall assembly. In Saccharomyces cerevisiae (strain ATCC 204508 / S288c) (Baker's yeast), this protein is 1,3-beta-glucanosyltransferase GAS2 (GAS2).